A 271-amino-acid chain; its full sequence is Expansin-B1 (271 aa).

Residues 1 to 24 (MQLFPVILPTLCVFLHLLISGSGS) form the signal peptide. Residues 58-169 (GGACGYGSLV…RRTACKYRGK (112 aa)) enclose the Expansin-like EG45 domain. Cystine bridges form between C61–C90, C93–C164, and C98–C104. In terms of domain architecture, Expansin-like CBD spans 182–263 (YWLSLLIEYE…NWVPKATYTS (82 aa)). N242 is a glycosylation site (N-linked (GlcNAc...) asparagine).

Belongs to the expansin family. Expansin B subfamily.

It localises to the secreted. The protein resides in the cell wall. It is found in the membrane. In terms of biological role, may cause loosening and extension of plant cell walls by disrupting non-covalent bonding between cellulose microfibrils and matrix glucans. No enzymatic activity has been found. The sequence is that of Expansin-B1 (EXPB1) from Arabidopsis thaliana (Mouse-ear cress).